A 95-amino-acid polypeptide reads, in one-letter code: Aspartyl/glutamyl-tRNA(Asn/Gln) amidotransferase subunit C (95 aa).

This sequence belongs to the GatC family. Heterotrimer of A, B and C subunits.

The catalysed reaction is L-glutamyl-tRNA(Gln) + L-glutamine + ATP + H2O = L-glutaminyl-tRNA(Gln) + L-glutamate + ADP + phosphate + H(+). It carries out the reaction L-aspartyl-tRNA(Asn) + L-glutamine + ATP + H2O = L-asparaginyl-tRNA(Asn) + L-glutamate + ADP + phosphate + 2 H(+). Allows the formation of correctly charged Asn-tRNA(Asn) or Gln-tRNA(Gln) through the transamidation of misacylated Asp-tRNA(Asn) or Glu-tRNA(Gln) in organisms which lack either or both of asparaginyl-tRNA or glutaminyl-tRNA synthetases. The reaction takes place in the presence of glutamine and ATP through an activated phospho-Asp-tRNA(Asn) or phospho-Glu-tRNA(Gln). The chain is Aspartyl/glutamyl-tRNA(Asn/Gln) amidotransferase subunit C from Chlorobaculum parvum (strain DSM 263 / NCIMB 8327) (Chlorobium vibrioforme subsp. thiosulfatophilum).